The chain runs to 140 residues: Nucleoside diphosphate kinase (140 aa).

Positions 11, 59, 87, 93, 104, and 114 each coordinate ATP. Histidine 117 serves as the catalytic Pros-phosphohistidine intermediate.

Belongs to the NDK family. As to quaternary structure, homotetramer. Mg(2+) is required as a cofactor.

The protein resides in the cytoplasm. It carries out the reaction a 2'-deoxyribonucleoside 5'-diphosphate + ATP = a 2'-deoxyribonucleoside 5'-triphosphate + ADP. It catalyses the reaction a ribonucleoside 5'-diphosphate + ATP = a ribonucleoside 5'-triphosphate + ADP. Its function is as follows. Major role in the synthesis of nucleoside triphosphates other than ATP. The ATP gamma phosphate is transferred to the NDP beta phosphate via a ping-pong mechanism, using a phosphorylated active-site intermediate. The chain is Nucleoside diphosphate kinase from Rhodopseudomonas palustris (strain BisA53).